The sequence spans 256 residues: Enolase-phosphatase E1 (256 aa).

Residues Asp14 and Glu16 each contribute to the Mg(2+) site. Substrate is bound by residues 142-143 and Lys176; that span reads SS. A Mg(2+)-binding site is contributed by Asp201.

This sequence belongs to the HAD-like hydrolase superfamily. MasA/MtnC family. In terms of assembly, monomer. The cofactor is Mg(2+).

The protein resides in the cytoplasm. The protein localises to the nucleus. It carries out the reaction 5-methylsulfanyl-2,3-dioxopentyl phosphate + H2O = 1,2-dihydroxy-5-(methylsulfanyl)pent-1-en-3-one + phosphate. It participates in amino-acid biosynthesis; L-methionine biosynthesis via salvage pathway; L-methionine from S-methyl-5-thio-alpha-D-ribose 1-phosphate: step 3/6. It functions in the pathway amino-acid biosynthesis; L-methionine biosynthesis via salvage pathway; L-methionine from S-methyl-5-thio-alpha-D-ribose 1-phosphate: step 4/6. Functionally, bifunctional enzyme that catalyzes the enolization of 2,3-diketo-5-methylthiopentyl-1-phosphate (DK-MTP-1-P) into the intermediate 2-hydroxy-3-keto-5-methylthiopentenyl-1-phosphate (HK-MTPenyl-1-P), which is then dephosphorylated to form the acireductone 1,2-dihydroxy-3-keto-5-methylthiopentene (DHK-MTPene). The sequence is that of Enolase-phosphatase E1 from Drosophila sechellia (Fruit fly).